The following is a 190-amino-acid chain: Threonylcarbamoyl-AMP synthase (190 aa).

The YrdC-like domain maps to arginine 7–glycine 190.

Belongs to the SUA5 family. TsaC subfamily.

The protein localises to the cytoplasm. It catalyses the reaction L-threonine + hydrogencarbonate + ATP = L-threonylcarbamoyladenylate + diphosphate + H2O. Functionally, required for the formation of a threonylcarbamoyl group on adenosine at position 37 (t(6)A37) in tRNAs that read codons beginning with adenine. Catalyzes the conversion of L-threonine, HCO(3)(-)/CO(2) and ATP to give threonylcarbamoyl-AMP (TC-AMP) as the acyladenylate intermediate, with the release of diphosphate. The sequence is that of Threonylcarbamoyl-AMP synthase from Yersinia enterocolitica serotype O:8 / biotype 1B (strain NCTC 13174 / 8081).